Here is a 575-residue protein sequence, read N- to C-terminus: Protein AUXIN SIGNALING F-BOX 2 (575 aa).

The 47-residue stretch at 1 to 47 (MNYFPDEVIEHVFDFVTSHKDRNAISLVCKSWYKIERYSRQKVFIGN) folds into the F-box domain. Residue Lys-69 participates in 1D-myo-inositol hexakisphosphate binding. Residues 76 to 77 (DF) form an interaction with auxin-responsive proteins region. Residues 108–109 (KR) and Arg-340 each bind 1D-myo-inositol hexakisphosphate. Positions 343–348 (PSDLLG) are interaction with auxin-responsive proteins. 396 to 398 (RFR) contacts 1D-myo-inositol hexakisphosphate. Residues 400 to 404 (CILEP) are interaction with auxin-responsive proteins. Arg-431 is a 1D-myo-inositol hexakisphosphate binding site. An interaction with auxin-responsive proteins region spans residues 459-460 (AF). 1D-myo-inositol hexakisphosphate is bound by residues 479 to 480 (KK) and Arg-504.

As to quaternary structure, part of a SCF (SKP1-cullin-F-box) protein ligase complex. Interacts with Aux/IAA proteins (IAA7) in an auxin-dependent manner. As to expression, ubiquitous, with higher levels in seedlings.

It localises to the nucleus. It functions in the pathway protein modification; protein ubiquitination. In terms of biological role, component of SCF(ASK-cullin-F-box) E3 ubiquitin ligase complexes, which may mediate the ubiquitination and subsequent proteasomal degradation of target proteins. Confers sensitivity to the virulent bacterial pathogen P.syringae. Auxin receptor that mediates Aux/IAA proteins proteasomal degradation and auxin-regulated transcription. Involved in embryogenesis regulation by auxin. This chain is Protein AUXIN SIGNALING F-BOX 2 (AFB2), found in Arabidopsis thaliana (Mouse-ear cress).